Here is a 190-residue protein sequence, read N- to C-terminus: Adenylate kinase (190 aa).

11–16 (GAGKGT) is an ATP binding site. Residues 31-60 (STGDIFRFNLKNDTELGKQARVFMDNGELV) form an NMP region. AMP is bound by residues threonine 32, arginine 37, 58–60 (ELV), 86–89 (GYPR), and glutamine 93. The segment at 127 to 137 (ERGKTSGRADD) is LID. Arginine 128 serves as a coordination point for ATP. AMP contacts are provided by arginine 134 and arginine 146. ATP is bound at residue glycine 174.

Belongs to the adenylate kinase family. In terms of assembly, monomer.

The protein localises to the cytoplasm. The catalysed reaction is AMP + ATP = 2 ADP. It participates in purine metabolism; AMP biosynthesis via salvage pathway; AMP from ADP: step 1/1. Catalyzes the reversible transfer of the terminal phosphate group between ATP and AMP. Plays an important role in cellular energy homeostasis and in adenine nucleotide metabolism. The protein is Adenylate kinase of Flavobacterium johnsoniae (strain ATCC 17061 / DSM 2064 / JCM 8514 / BCRC 14874 / CCUG 350202 / NBRC 14942 / NCIMB 11054 / UW101) (Cytophaga johnsonae).